The chain runs to 142 residues: Large ribosomal subunit protein uL11 (142 aa).

The protein belongs to the universal ribosomal protein uL11 family. Part of the ribosomal stalk of the 50S ribosomal subunit. Interacts with L10 and the large rRNA to form the base of the stalk. L10 forms an elongated spine to which L12 dimers bind in a sequential fashion forming a multimeric L10(L12)X complex. Post-translationally, one or more lysine residues are methylated.

In terms of biological role, forms part of the ribosomal stalk which helps the ribosome interact with GTP-bound translation factors. This Photorhabdus laumondii subsp. laumondii (strain DSM 15139 / CIP 105565 / TT01) (Photorhabdus luminescens subsp. laumondii) protein is Large ribosomal subunit protein uL11.